Reading from the N-terminus, the 143-residue chain is Sec-independent protein translocase protein TatB (143 aa).

Residues 2 to 22 (FGNIGWGEFMVLLVAALVILG) traverse the membrane as a helical segment. The interval 97 to 143 (FDKPGSVSFDKSNPGTKAVSADPSTPTAPQNKPLAAGERPPIDLDAT) is disordered.

Belongs to the TatB family. The Tat system comprises two distinct complexes: a TatABC complex, containing multiple copies of TatA, TatB and TatC subunits, and a separate TatA complex, containing only TatA subunits. Substrates initially bind to the TatABC complex, which probably triggers association of the separate TatA complex to form the active translocon.

It is found in the cell membrane. Part of the twin-arginine translocation (Tat) system that transports large folded proteins containing a characteristic twin-arginine motif in their signal peptide across membranes. Together with TatC, TatB is part of a receptor directly interacting with Tat signal peptides. TatB may form an oligomeric binding site that transiently accommodates folded Tat precursor proteins before their translocation. This is Sec-independent protein translocase protein TatB from Rhodococcus opacus (strain B4).